Consider the following 88-residue polypeptide: MSSFDQTMQFHFPEEPAETNVREVLLTVYDALQEKGYNPINQIVGYLLSGDPAYIPRHKDARTLIRKIERDELIEELVKFYLQGQRKG.

It belongs to the UPF0297 family.

This is UPF0297 protein GTNG_2488 from Geobacillus thermodenitrificans (strain NG80-2).